Consider the following 388-residue polypeptide: T-cell surface glycoprotein CD1e, membrane-associated (388 aa).

An N-terminal signal peptide occupies residues 1-19; the sequence is MLLLFLLFEGLCCPGENTA. Residues 20 to 31 constitute a propeptide, removed in sCD1e; sequence APQALQSYHLAA. N-linked (GlcNAc...) asparagine glycans are attached at residues Asn-47 and Asn-84. The 111-residue stretch at 191 to 301 folds into the Ig-like domain; it reads PRFLAGLMEA…LGGHDLIIHW (111 aa). A disulfide bridge links Cys-230 with Cys-285. A helical transmembrane segment spans residues 305–325; the sequence is SIFLILICLTVIVTLVILVVV.

Heterodimer with B2M (beta-2-microglobulin). The association with B2M appears to be facilitated by the presence of the propeptide. Post-translationally, mono-ubiquitinated. Proteolytically cleaved in late endosomes to yield a soluble form. In terms of tissue distribution, expressed on cortical thymocytes, dendritic cells, Langerhans cells, on certain T-cell leukemias, and in various other tissues.

It localises to the golgi apparatus membrane. The protein resides in the early endosome. The protein localises to the late endosome. It is found in the lysosome lumen. In terms of biological role, T-cell surface glycoprotein CD1e, soluble binds diacetylated lipids, including phosphatidyl inositides and diacylated sulfoglycolipids, and is required for the presentation of glycolipid antigens on the cell surface. The membrane-associated form is not active. This is T-cell surface glycoprotein CD1e, membrane-associated (CD1E) from Homo sapiens (Human).